The following is a 107-amino-acid chain: Large ribosomal subunit protein P1 (107 aa).

The segment covering 68–82 (PATAGAPAAAGAAAP) has biased composition (low complexity). The segment at 68–107 (PATAGAPAAAGAAAPAEEKKEEKEEEKEESDEDMGFGLFD) is disordered. Acidic residues predominate over residues 90-101 (KEEEKEESDEDM).

Belongs to the eukaryotic ribosomal protein P1/P2 family. As to quaternary structure, P1 and P2 exist as dimers at the large ribosomal subunit.

The protein localises to the cytoplasm. Plays an important role in the elongation step of protein synthesis. The sequence is that of Large ribosomal subunit protein P1 from Penicillium brevicompactum.